The primary structure comprises 393 residues: Small ribosomal subunit protein bS1 (393 aa).

4 S1 motif domains span residues 16–90 (GDKV…LSKR), 108–173 (NQTI…LSRK), 194–262 (GDVI…LSIK), and 279–348 (GDVI…LSIK). A compositionally biased stretch (polar residues) spans 356 to 369 (VIESDSETTQSYLD). The disordered stretch occupies residues 356–381 (VIESDSETTQSYLDNGSDDEDNPTLG).

Belongs to the bacterial ribosomal protein bS1 family.

Functionally, binds mRNA; thus facilitating recognition of the initiation point. It is needed to translate mRNA with a short Shine-Dalgarno (SD) purine-rich sequence. This chain is Small ribosomal subunit protein bS1 (rpsA), found in Staphylococcus saprophyticus subsp. saprophyticus (strain ATCC 15305 / DSM 20229 / NCIMB 8711 / NCTC 7292 / S-41).